The chain runs to 520 residues: UDP-N-acetylmuramoyl-L-alanyl-D-glutamate--2,6-diaminopimelate ligase (520 aa).

Leucine 48 contributes to the UDP-N-acetyl-alpha-D-muramoyl-L-alanyl-D-glutamate binding site. Position 134 to 140 (134 to 140 (GTSGKTT)) interacts with ATP. UDP-N-acetyl-alpha-D-muramoyl-L-alanyl-D-glutamate is bound by residues 176–177 (TT), serine 203, and arginine 211. Lysine 243 carries the N6-carboxylysine modification. Meso-2,6-diaminopimelate-binding positions include arginine 405, 429-432 (DNPR), glycine 483, and glutamate 487. Positions 429 to 432 (DNPR) match the Meso-diaminopimelate recognition motif motif.

It belongs to the MurCDEF family. MurE subfamily. Mg(2+) is required as a cofactor. In terms of processing, carboxylation is probably crucial for Mg(2+) binding and, consequently, for the gamma-phosphate positioning of ATP.

Its subcellular location is the cytoplasm. The catalysed reaction is UDP-N-acetyl-alpha-D-muramoyl-L-alanyl-D-glutamate + meso-2,6-diaminopimelate + ATP = UDP-N-acetyl-alpha-D-muramoyl-L-alanyl-gamma-D-glutamyl-meso-2,6-diaminopimelate + ADP + phosphate + H(+). It functions in the pathway cell wall biogenesis; peptidoglycan biosynthesis. Catalyzes the addition of meso-diaminopimelic acid to the nucleotide precursor UDP-N-acetylmuramoyl-L-alanyl-D-glutamate (UMAG) in the biosynthesis of bacterial cell-wall peptidoglycan. This chain is UDP-N-acetylmuramoyl-L-alanyl-D-glutamate--2,6-diaminopimelate ligase, found in Mycolicibacterium paratuberculosis (strain ATCC BAA-968 / K-10) (Mycobacterium paratuberculosis).